The sequence spans 75 residues: Dermaseptin-S11 (75 aa).

The first 22 residues, 1–22 (MAFLKKSLFLVLFLGMVSLSIC), serve as a signal peptide directing secretion. The propeptide occupies 23-45 (EEEKRENEDEEEQEDDEQSEEKR). A disordered region spans residues 25–44 (EKRENEDEEEQEDDEQSEEK). Residues 30–41 (EDEEEQEDDEQS) show a composition bias toward acidic residues.

Belongs to the frog skin active peptide (FSAP) family. Dermaseptin subfamily. Expressed by the skin glands.

It is found in the secreted. The protein localises to the target cell membrane. Functionally, antimicrobial peptide with activity against Gram-positive and Gram-negative bacteria, and fungi. Has hemolytic activity. The protein is Dermaseptin-S11 of Phyllomedusa sauvagei (Sauvage's leaf frog).